Consider the following 369-residue polypeptide: MKLNQFGAAIGLLATGALLSGCGSDNNAAVGSARTGPSSGQVSCGGKPTLKASGSTAQANAMTRFVNAFERSCPGQTLNYTANGSGAGVSEFNGNQTDFGGSDSPLSRKEYAAAEQRCGSQAWNLPVVFGPIAITYNVNGLSSLNLDGPTTAKIFNGSIASWNDPAIQALNTGVALPAEPIHVVFRNDESGTTDNFQRYLDVASNGEWGKGIGKTFKGGVGEGAKGNDGTSAAVKSTEGSITYNEWSFASARKLNTAKIATSADPEPIAISVDSVGKTISGATIIGEGNDLVLDTVSFYKPAQPGSYPIVLATYEIVCSKYPDAQVGRAVKAFLQSTIGGGQNGLGDNGYVPIPDSFKSRLSTAANAIA.

Positions 1–21 (MKLNQFGAAIGLLATGALLSG) are cleaved as a signal peptide. Cys22 is lipidated: N-palmitoyl cysteine. The S-diacylglycerol cysteine moiety is linked to residue Cys22. Residues 55–57 (STA), Ser85, Asp103, and 190–192 (SGT) each bind phosphate.

This sequence belongs to the PstS family. The complex is composed of two ATP-binding proteins (PstB), two transmembrane proteins (PstC and PstA) and a solute-binding protein (PstS).

The protein localises to the cell membrane. Part of the ABC transporter complex PstSACB involved in phosphate import. The chain is Phosphate-binding protein PstS 3 (pstS2) from Mycobacterium leprae (strain TN).